The sequence spans 420 residues: Serine hydroxymethyltransferase (420 aa).

Residues L121 and G125–L127 contribute to the (6S)-5,6,7,8-tetrahydrofolate site. K230 carries the N6-(pyridoxal phosphate)lysine modification. (6S)-5,6,7,8-tetrahydrofolate is bound by residues E246 and S354 to F356.

The protein belongs to the SHMT family. In terms of assembly, homodimer. The cofactor is pyridoxal 5'-phosphate.

It localises to the cytoplasm. It carries out the reaction (6R)-5,10-methylene-5,6,7,8-tetrahydrofolate + glycine + H2O = (6S)-5,6,7,8-tetrahydrofolate + L-serine. Its pathway is one-carbon metabolism; tetrahydrofolate interconversion. It functions in the pathway amino-acid biosynthesis; glycine biosynthesis; glycine from L-serine: step 1/1. Functionally, catalyzes the reversible interconversion of serine and glycine with tetrahydrofolate (THF) serving as the one-carbon carrier. This reaction serves as the major source of one-carbon groups required for the biosynthesis of purines, thymidylate, methionine, and other important biomolecules. Also exhibits THF-independent aldolase activity toward beta-hydroxyamino acids, producing glycine and aldehydes, via a retro-aldol mechanism. This is Serine hydroxymethyltransferase from Rickettsia peacockii (strain Rustic).